Here is a 356-residue protein sequence, read N- to C-terminus: MAGLKLQAVTKSWDGKTQVIKPLTLDVADGEFIVMVGPSGCGKSTLLRMVAGLERVTEGDIWINDQRVTEMEPKDRGIAMVFQNYALYPHMSVEENMAWGLKIRGMGKQQIAERVKEAARILELDGLLKRRPRELSGGQRQRVAMGRAIVRDPAVFLFDEPLSNLDAKLRVQMRLELQQLHRRLKTTSLYVTHDQVEAMTLAQRVMVMNGGVAEQIGTPVEVYEKPASLFVASFIGSPAMNLLTGRVNNEGTHFELDGGIELPLNGGYRQYAGRKMTLGIRPEHIALSSQAEGGVPMVMDTLEILGADNLAHGRWGEQKLVVRLAHQERPTAGSTLWLHLAENQLHLFDGETGQRV.

The region spanning 4–235 (LKLQAVTKSW…PASLFVASFI (232 aa)) is the ABC transporter domain. Residue 37 to 44 (GPSGCGKS) participates in ATP binding.

The protein belongs to the ABC transporter superfamily. sn-glycerol-3-phosphate importer (TC 3.A.1.1.3) family. As to quaternary structure, the complex is composed of two ATP-binding proteins (UgpC), two transmembrane proteins (UgpA and UgpE) and a solute-binding protein (UgpB).

Its subcellular location is the cell inner membrane. It carries out the reaction sn-glycerol 3-phosphate(out) + ATP + H2O = sn-glycerol 3-phosphate(in) + ADP + phosphate + H(+). The enzyme catalyses glycerol 2-phosphate(out) + ATP + H2O = glycerol 2-phosphate(in) + ADP + phosphate + H(+). ATPase activity is stimulated when UgpB is bound to G3P. Transport is inhibited in vivo by increasing levels of internal phosphate. However, ATPase activity in proteoliposomes is neither inhibited by phosphate nor by the signal transducing protein PhoU or the phosphodiesterase UgpQ. Activated by gluconate and inhibited by fumarate. Part of the ABC transporter complex UgpBAEC involved in sn-glycerol-3-phosphate (G3P) import. Responsible for energy coupling to the transport system. Can also transport glycerophosphoryl diesters, which are hydrolyzed to G3P and alcohol during transport. The G3P moiety can be detected in the cytoplasm whereas the corresponding alcohol is usually found in the culture medium. It was proposed by Yang et al that the complex could also transport glycerol-2-phosphate (G2P) in vivo, but it was shown later by Wuttge et al that UgpB does not bind G2P, questioning this transport activity. G2P might be converted in the periplasm to G3P before its transport. This chain is sn-glycerol-3-phosphate import ATP-binding protein UgpC, found in Escherichia coli (strain K12).